A 500-amino-acid polypeptide reads, in one-letter code: MSDQQLDPQALQQEENSLIALRKEKLAAERAKGNAFPNDFRRENYCEDLQKKYADKTKEELAEAAIPVKVAGRIMLNRGSFMVIQDMTGRIQVYVNRKTLSEETLASVKTWDMGDIIAAEGTLARSGKGDLYVEMTNVRLLTKSLRPLPDKHHGLTDTEQRYRQRYVDLIVNEEVRQTFRVRSQVIAHIRSFLMKRDFLEVETPMLQTIPGGAAAKPFETHHNALDMEMFLRIAPELYLKRLVVGGFEKVFEINRNFRNEGVSTRHNPEFTMLEFYQAYADYEDNMDLTEELFRELAQLVLGSTDVPYGDKVFHFGEPFARLSVFDSILKYNPELTADDLNDIDKARAIAKKAGAKVLGFEGLGKLQVMIFEELVEHKLEQPHFITQYPFEVSPLARRNDDNPNVTDRFELFIGGREIANAYSELNDAEDQAERFMAQVADKDAGDDEAMHYDADFVRALEYGMPPTAGEGIGIDRLVMLLTNSPSIRDVILFPHMRPQA.

Positions 410 and 417 each coordinate Mg(2+).

This sequence belongs to the class-II aminoacyl-tRNA synthetase family. Homodimer. Mg(2+) is required as a cofactor.

The protein resides in the cytoplasm. It carries out the reaction tRNA(Lys) + L-lysine + ATP = L-lysyl-tRNA(Lys) + AMP + diphosphate. This is Lysine--tRNA ligase from Pseudomonas fluorescens (strain ATCC BAA-477 / NRRL B-23932 / Pf-5).